The chain runs to 1373 residues: DNA-directed RNA polymerase subunit beta'' (1373 aa).

Zn(2+) contacts are provided by Cys-220, Cys-291, Cys-298, and Cys-301.

This sequence belongs to the RNA polymerase beta' chain family. RpoC2 subfamily. In terms of assembly, in plastids the minimal PEP RNA polymerase catalytic core is composed of four subunits: alpha, beta, beta', and beta''. When a (nuclear-encoded) sigma factor is associated with the core the holoenzyme is formed, which can initiate transcription. Zn(2+) serves as cofactor.

It localises to the plastid. The protein resides in the chloroplast. It catalyses the reaction RNA(n) + a ribonucleoside 5'-triphosphate = RNA(n+1) + diphosphate. Its function is as follows. DNA-dependent RNA polymerase catalyzes the transcription of DNA into RNA using the four ribonucleoside triphosphates as substrates. This is DNA-directed RNA polymerase subunit beta'' from Silene latifolia (White campion).